The sequence spans 786 residues: DNA double-strand break repair Rad50 ATPase (786 aa).

ATP contacts are provided by residues lysine 13, asparagine 33–threonine 39, and glutamine 138. 3 coiled-coil regions span residues leucine 194 to isoleucine 249, glutamate 337 to glutamate 455, and alanine 551 to leucine 650. In terms of domain architecture, Zinc-hook spans glutamate 366–glycine 459. Zn(2+) is bound by residues cysteine 411 and cysteine 414.

The protein belongs to the SMC family. RAD50 subfamily. Homodimer. Forms a heterotetramer composed of two Mre11 subunits and two Rad50 subunits. It depends on Zn(2+) as a cofactor.

In terms of biological role, part of the Rad50/Mre11 complex, which is involved in the early steps of DNA double-strand break (DSB) repair. The complex may facilitate opening of the processed DNA ends to aid in the recruitment of HerA and NurA. Rad50 controls the balance between DNA end bridging and DNA resection via ATP-dependent structural rearrangements of the Rad50/Mre11 complex. The sequence is that of DNA double-strand break repair Rad50 ATPase from Nanoarchaeum equitans (strain Kin4-M).